A 512-amino-acid polypeptide reads, in one-letter code: Oxalate--CoA ligase (512 aa).

Residue 168–179 (HTSGTTGRPKVV) coordinates ATP. 2 positions are modified to phosphoserine: S283 and S284. The FACS signature appears at 381–429 (DRFFRTGDEGKLDKDGYVFITGRIKELVNRGGEKISPAEIDAVLMQHPD). The Microbody targeting signal motif lies at 510 to 512 (AKL).

Belongs to the ATP-dependent AMP-binding enzyme family.

Its subcellular location is the peroxisome matrix. The protein localises to the peroxisome membrane. It catalyses the reaction oxalate + ATP + CoA = oxalyl-CoA + AMP + diphosphate. Its function is as follows. Catalyzes the first step in a degradation pathway of oxalate to CO(2) to protect the cell against the harmful effects of oxalate derived from endogenous processes or an environmental sources. This is Oxalate--CoA ligase (pcs60) from Schizosaccharomyces pombe (strain 972 / ATCC 24843) (Fission yeast).